A 414-amino-acid chain; its full sequence is Isocitrate dehydrogenase [NADP] cytoplasmic (414 aa).

An N-acetylserine modification is found at S2. Phosphotyrosine is present on Y42. 75–77 (TIT) contacts NADP(+). T77 is a substrate binding site. K81 is subject to N6-acetyllysine. R82 is an NADP(+) binding site. Substrate-binding positions include 94–100 (SPNGTIR) and R109. Residue K126 is modified to N6-succinyllysine. 2 residues coordinate substrate: R132 and K212. N6-acetyllysine occurs at positions 224, 233, and 243. D252 is a Mn(2+) binding site. Position 260 (K260) interacts with NADP(+). Positions 275 and 279 each coordinate Mn(2+). 310 to 315 (GTVTRH) is an NADP(+) binding site. N6-acetyllysine is present on K321. Position 328 (N328) interacts with NADP(+). The residue at position 389 (S389) is a Phosphoserine. An N6-succinyllysine modification is found at K400.

Belongs to the isocitrate and isopropylmalate dehydrogenases family. In terms of assembly, homodimer. The cofactor is Mg(2+). Mn(2+) serves as cofactor. In terms of processing, acetylation at Lys-374 dramatically reduces catalytic activity. Highly expressed in the liver followed by kidney, lower expression in spleen, brain and lung.

It is found in the cytoplasm. It localises to the cytosol. The enzyme catalyses D-threo-isocitrate + NADP(+) = 2-oxoglutarate + CO2 + NADPH. Irreversibly inhibited by Cd(2+) concentrations above 50 uM. Functionally, catalyzes the NADP(+)-dependent oxidative decarboxylation of isocitrate (D-threo-isocitrate) to 2-ketoglutarate (2-oxoglutarate), which is required by other enzymes such as the phytanoyl-CoA dioxygenase. Plays a critical role in the generation of NADPH, an important cofactor in many biosynthesis pathways. May act as a corneal epithelial crystallin and may be involved in maintaining corneal epithelial transparency. The sequence is that of Isocitrate dehydrogenase [NADP] cytoplasmic (Idh1) from Mus musculus (Mouse).